The following is a 410-amino-acid chain: Peptidase T (410 aa).

Histidine 79 is a Zn(2+) binding site. The active site involves aspartate 81. Zn(2+) is bound at residue aspartate 142. The active-site Proton acceptor is the glutamate 176. Residues glutamate 177, aspartate 199, and histidine 381 each contribute to the Zn(2+) site.

This sequence belongs to the peptidase M20B family. Requires Zn(2+) as cofactor.

The protein resides in the cytoplasm. It carries out the reaction Release of the N-terminal residue from a tripeptide.. Cleaves the N-terminal amino acid of tripeptides. The sequence is that of Peptidase T from Bacillus pumilus (strain SAFR-032).